We begin with the raw amino-acid sequence, 263 residues long: Troponin T, fast skeletal muscle isoforms (263 aa).

The segment covering 1-26 has biased composition (acidic residues); the sequence is MSDTEEVEHGEEEYEEEAHEAEEVHE. 3 disordered regions span residues 1–66, 107–188, and 243–263; these read MSDT…FDDI, RAER…VLAE, and DQAQ…GRWK. Ser-2 carries the N-acetylserine modification. Composition is skewed to basic and acidic residues over residues 56–66, 107–149, and 177–188; these read PEGEKVDFDDI, RAER…DDLK, and TARETKKKVLAE. Residues 247–263 are compositionally biased toward basic residues; sequence KHSKKAGAKGKVGGRWK.

This sequence belongs to the troponin T family.

Its function is as follows. Troponin T is the tropomyosin-binding subunit of troponin, the thin filament regulatory complex which confers calcium-sensitivity to striated muscle actomyosin ATPase activity. The chain is Troponin T, fast skeletal muscle isoforms (TNNT3) from Gallus gallus (Chicken).